Here is an 822-residue protein sequence, read N- to C-terminus: Aminopeptidase O (822 aa).

H480 provides a ligand contact to Zn(2+). The active-site Proton acceptor is the E481. 2 residues coordinate Zn(2+): H484 and E503. The short motif at 692–702 (RRPGKRQRRKR) is the Nucleolar localization signal element.

Belongs to the peptidase M1 family. The cofactor is Zn(2+).

The protein resides in the nucleus. The protein localises to the nucleolus. Aminopeptidase which catalyzes the hydrolysis of amino acid residues from the N-terminus of peptide or protein substrates. This Rattus norvegicus (Rat) protein is Aminopeptidase O (Aopep).